The primary structure comprises 460 residues: Cysteine--tRNA ligase (460 aa).

C28 contributes to the Zn(2+) binding site. The 'HIGH' region signature appears at 30 to 40 (NTVYDFCHIGH). Zn(2+)-binding residues include C209, H234, and E238. Residues 266 to 270 (KMSKS) carry the 'KMSKS' region motif. ATP is bound at residue K269.

It belongs to the class-I aminoacyl-tRNA synthetase family. As to quaternary structure, monomer. The cofactor is Zn(2+).

It localises to the cytoplasm. The catalysed reaction is tRNA(Cys) + L-cysteine + ATP = L-cysteinyl-tRNA(Cys) + AMP + diphosphate. The sequence is that of Cysteine--tRNA ligase from Marinomonas sp. (strain MWYL1).